The sequence spans 198 residues: Riboflavin synthase (198 aa).

2 Lumazine-binding repeats span residues 1-95 (MFSG…IGGH) and 96-188 (FVSG…VDTV). 2,4-dihydroxypteridine-binding positions include 4 to 6 (GII), 46 to 48 (CLT), 60 to 65 (DVTEET), 99 to 101 (GHV), Lys130, 139 to 141 (SLT), and 153 to 158 (SVIPET).

As to quaternary structure, homotrimer.

It catalyses the reaction 2 6,7-dimethyl-8-(1-D-ribityl)lumazine + H(+) = 5-amino-6-(D-ribitylamino)uracil + riboflavin. It participates in cofactor biosynthesis; riboflavin biosynthesis; riboflavin from 2-hydroxy-3-oxobutyl phosphate and 5-amino-6-(D-ribitylamino)uracil: step 2/2. Its function is as follows. Catalyzes the dismutation of two molecules of 6,7-dimethyl-8-ribityllumazine, resulting in the formation of riboflavin and 5-amino-6-(D-ribitylamino)uracil. This is Riboflavin synthase (ribE) from Chlamydia muridarum (strain MoPn / Nigg).